The primary structure comprises 193 residues: dCTP deaminase (193 aa).

DCTP contacts are provided by residues 110–115 (RSSLAR), Asp128, 136–138 (VLE), Tyr171, Lys178, and Gln182. Residue Glu138 is the Proton donor/acceptor of the active site. The interval 171–193 (YHQRQDAKYHNQKGAVASRIDKD) is disordered.

Belongs to the dCTP deaminase family. Homotrimer.

It catalyses the reaction dCTP + H2O + H(+) = dUTP + NH4(+). It participates in pyrimidine metabolism; dUMP biosynthesis; dUMP from dCTP (dUTP route): step 1/2. Functionally, catalyzes the deamination of dCTP to dUTP. The polypeptide is dCTP deaminase (Hamiltonella defensa subsp. Acyrthosiphon pisum (strain 5AT)).